Reading from the N-terminus, the 761-residue chain is Zinc finger protein 711 (761 aa).

5 C2H2-type zinc fingers span residues 383–408 (YPCHICGKKFKSRGFLKRHMKNHPDH), 414–436 (YQCTDCEFTTNKKVSFHNHLESH), 476–499 (HKCKYCEYETAEQGLLNRHLLAVH), 505–527 (HVCVECAKGFRHPSELKKHMRTH), and 533–556 (FHCQHCEFSCADQSNLKTHIKSKH). The segment at 562 to 584 (FKCGHCPQAFADDKELQRHAEIF) adopts a C2H2-type 6; atypical zinc-finger fold. Zn(2+)-binding residues include cysteine 564, cysteine 567, and histidine 580. 6 C2H2-type zinc fingers span residues 590–613 (HQCPHCEHKSTNSSDLKRHIISVH), 619–641 (HKCDVCEKGFHRPSELKKHSETH), 647–670 (HQCRHCDFKTLDPFTLSRHILSVH), 676–698 (FKCKRCKRGFRHQNELKKHMKTH), 704–727 (YQCQYCEYNTTDASGFKRHVISIH), and 733–755 (HRCDYCKKGFRRPSEKNQHIMRH).

Belongs to the krueppel C2H2-type zinc-finger protein family. As to expression, present in ovary and brain but not in other tissues (at protein level).

Its subcellular location is the nucleus. The protein localises to the cytoplasm. Functionally, transcription regulator required for brain development. Probably acts as a transcription factor that binds to the promoter of target genes, leading to activate their expression. This chain is Zinc finger protein 711 (znf711), found in Danio rerio (Zebrafish).